A 645-amino-acid chain; its full sequence is 1,4-alpha-glucan branching enzyme GlgB (645 aa).

Residue Asp-309 is the Nucleophile of the active site. Catalysis depends on Glu-352, which acts as the Proton donor. The segment at Val-619–Arg-645 is disordered. Positions Arg-636–Arg-645 are enriched in polar residues.

The protein belongs to the glycosyl hydrolase 13 family. GlgB subfamily. Monomer.

The enzyme catalyses Transfers a segment of a (1-&gt;4)-alpha-D-glucan chain to a primary hydroxy group in a similar glucan chain.. Its pathway is glycan biosynthesis; glycogen biosynthesis. Catalyzes the formation of the alpha-1,6-glucosidic linkages in glycogen by scission of a 1,4-alpha-linked oligosaccharide from growing alpha-1,4-glucan chains and the subsequent attachment of the oligosaccharide to the alpha-1,6 position. The polypeptide is 1,4-alpha-glucan branching enzyme GlgB (Bacillus cereus (strain ATCC 14579 / DSM 31 / CCUG 7414 / JCM 2152 / NBRC 15305 / NCIMB 9373 / NCTC 2599 / NRRL B-3711)).